We begin with the raw amino-acid sequence, 123 residues long: Cholecystokinin A (123 aa).

The first 20 residues, 1 to 20, serve as a signal peptide directing secretion; the sequence is MYSGICICLLLAMLSASSKA. Positions 21-103 are excised as a propeptide; that stretch reads HQSEDAVVTE…FDQPHRINDR (83 aa). The residue at position 105 (Tyr-105) is a Sulfotyrosine. Phe-111 bears the Phenylalanine amide mark. Positions 115 to 123 are excised as a propeptide; that stretch reads SAEEYEYSS.

This sequence belongs to the gastrin/cholecystokinin family. The precursor is cleaved by proteases to produce a number of active cholecystokinins. Brain, gastrointestinal tract and lung.

It is found in the secreted. The polypeptide is Cholecystokinin A (cck-a) (Xenopus laevis (African clawed frog)).